Here is a 282-residue protein sequence, read N- to C-terminus: Sirohydrochlorin cobaltochelatase CbiKC (282 aa).

Residue histidine 166 is the Proton acceptor of the active site. Co(2+) contacts are provided by histidine 166 and histidine 228.

It belongs to the CbiK family.

Its subcellular location is the cytoplasm. It carries out the reaction Co-sirohydrochlorin + 2 H(+) = sirohydrochlorin + Co(2+). The enzyme catalyses siroheme + 2 H(+) = sirohydrochlorin + Fe(2+). It functions in the pathway cofactor biosynthesis; adenosylcobalamin biosynthesis; cob(II)yrinate a,c-diamide from sirohydrochlorin (anaerobic route): step 1/10. The protein operates within porphyrin-containing compound metabolism; siroheme biosynthesis; siroheme from sirohydrochlorin: step 1/1. Its function is as follows. Catalyzes the insertion of Co(2+) into sirohydrochlorin as part of the anaerobic pathway to cobalamin biosynthesis. To a lesser extent, is also able to insert Fe(2+) into sirohydrochlorin, yielding siroheme. The sequence is that of Sirohydrochlorin cobaltochelatase CbiKC (cbiKc) from Nitratidesulfovibrio vulgaris (strain ATCC 29579 / DSM 644 / CCUG 34227 / NCIMB 8303 / VKM B-1760 / Hildenborough) (Desulfovibrio vulgaris).